A 245-amino-acid chain; its full sequence is Orotidine 5'-phosphate decarboxylase (245 aa).

Substrate is bound by residues Asp-22, Lys-44, 71–80 (DLKFHDIPNT), Thr-131, Arg-192, Gln-201, Gly-221, and Arg-222. Lys-73 acts as the Proton donor in catalysis.

The protein belongs to the OMP decarboxylase family. Type 1 subfamily. Homodimer.

The enzyme catalyses orotidine 5'-phosphate + H(+) = UMP + CO2. It functions in the pathway pyrimidine metabolism; UMP biosynthesis via de novo pathway; UMP from orotate: step 2/2. Functionally, catalyzes the decarboxylation of orotidine 5'-monophosphate (OMP) to uridine 5'-monophosphate (UMP). The protein is Orotidine 5'-phosphate decarboxylase of Shigella flexneri serotype 5b (strain 8401).